A 272-amino-acid polypeptide reads, in one-letter code: GTP cyclohydrolase FolE2 (272 aa).

Belongs to the GTP cyclohydrolase IV family.

It catalyses the reaction GTP + H2O = 7,8-dihydroneopterin 3'-triphosphate + formate + H(+). It functions in the pathway cofactor biosynthesis; 7,8-dihydroneopterin triphosphate biosynthesis; 7,8-dihydroneopterin triphosphate from GTP: step 1/1. Converts GTP to 7,8-dihydroneopterin triphosphate. This is GTP cyclohydrolase FolE2 from Aromatoleum aromaticum (strain DSM 19018 / LMG 30748 / EbN1) (Azoarcus sp. (strain EbN1)).